The following is a 302-amino-acid chain: Nucleotide-binding protein Bcep18194_A6125 (302 aa).

8-15 (GISGSGKS) contributes to the ATP binding site. 57–60 (DARS) is a GTP binding site.

The protein belongs to the RapZ-like family.

In terms of biological role, displays ATPase and GTPase activities. This is Nucleotide-binding protein Bcep18194_A6125 from Burkholderia lata (strain ATCC 17760 / DSM 23089 / LMG 22485 / NCIMB 9086 / R18194 / 383).